Consider the following 100-residue polypeptide: MGSLLGLCLIVQIITGLFLAMHYVSDISSAFSSVAHICRDVNYGWLIRNFHANGASLFFICIYLHIARGLYYGSYLYMETWNIGVILLLLTMMTAFVGYV.

3 helical membrane passes run M1–M21, W45–I66, and W81–V100. Heme b-binding residues include H51 and H65.

The protein belongs to the cytochrome b family. In terms of assembly, the cytochrome bc1 complex contains 3 respiratory subunits (MT-CYB, CYC1 and UQCRFS1), 2 core proteins (UQCRC1 and UQCRC2) and probably 6 low-molecular weight proteins. The cofactor is heme b.

Its subcellular location is the mitochondrion inner membrane. Its function is as follows. Component of the ubiquinol-cytochrome c reductase complex (complex III or cytochrome b-c1 complex) that is part of the mitochondrial respiratory chain. The b-c1 complex mediates electron transfer from ubiquinol to cytochrome c. Contributes to the generation of a proton gradient across the mitochondrial membrane that is then used for ATP synthesis. This chain is Cytochrome b (mt-cyb), found in Polypterus sp. (Bichir).